The chain runs to 103 residues: N(4)-acetylcytidine amidohydrolase (103 aa).

Residues 6-92 (TFFERFEPGI…VIQEIYPGLE (87 aa)) form the ASCH domain. Lysine 20 acts as the Proton acceptor in catalysis. Residue threonine 23 is the Nucleophile of the active site. The Proton donor role is filled by glutamate 73.

It belongs to the N(4)-acetylcytidine amidohydrolase family.

It carries out the reaction N(4)-acetylcytidine + H2O = cytidine + acetate + H(+). The catalysed reaction is N(4)-acetyl-2'-deoxycytidine + H2O = 2'-deoxycytidine + acetate + H(+). The enzyme catalyses N(4)-acetylcytosine + H2O = cytosine + acetate + H(+). Catalyzes the hydrolysis of N(4)-acetylcytidine (ac4C). This chain is N(4)-acetylcytidine amidohydrolase, found in Shewanella sp. (strain MR-7).